The sequence spans 78 residues: MFTTKKSMLLLFFLGTISLSLCEEERGADEEEGDGEKLMKRGLFSILKGVGKIALKGLAKNMGKMGLDLVSCKISKEC.

An N-terminal signal peptide occupies residues 1–22 (MFTTKKSMLLLFFLGTISLSLC). Residues 23-39 (EEERGADEEEGDGEKLM) constitute a propeptide that is removed on maturation. Cys-72 and Cys-78 are joined by a disulfide.

In terms of tissue distribution, expressed by the skin glands.

The protein localises to the secreted. Antimicrobial activity against the Gram-negative bacterium E.coli, the Gram-positive bacterium S.aureus and the yeast C.albicans. This is Esculentin-2PLa from Lithobates palustris (Pickerel frog).